A 210-amino-acid chain; its full sequence is Putative fructokinase-8 (210 aa).

It belongs to the carbohydrate kinase PfkB family.

The catalysed reaction is D-fructose + ATP = D-fructose 6-phosphate + ADP + H(+). Its pathway is glycan biosynthesis; starch biosynthesis. In terms of biological role, may play an important role in maintaining the flux of carbon towards starch formation. The sequence is that of Putative fructokinase-8 from Arabidopsis thaliana (Mouse-ear cress).